Consider the following 158-residue polypeptide: MNIIEGNIRATGKKFALVVSRFNSFVVESLVEGALDTLERHGEVNSQDITLVRVPGAYELPIAAKKLAEKGTFDGIIALGAVIRGGTPHFEFVAGECNKGLAQVSLEFGIPVSFGVITTDSIEQAIERSGTKAGNKGAEAALGALEMVNVMANIEGAE.

5-amino-6-(D-ribitylamino)uracil is bound by residues F22, 57-59 (AYE), and 81-83 (AVI). 86–87 (GT) contacts (2S)-2-hydroxy-3-oxobutyl phosphate. H89 serves as the catalytic Proton donor. F114 contributes to the 5-amino-6-(D-ribitylamino)uracil binding site. Residue R128 participates in (2S)-2-hydroxy-3-oxobutyl phosphate binding.

This sequence belongs to the DMRL synthase family. Forms an icosahedral capsid composed of 60 subunits, arranged as a dodecamer of pentamers.

It catalyses the reaction (2S)-2-hydroxy-3-oxobutyl phosphate + 5-amino-6-(D-ribitylamino)uracil = 6,7-dimethyl-8-(1-D-ribityl)lumazine + phosphate + 2 H2O + H(+). The protein operates within cofactor biosynthesis; riboflavin biosynthesis; riboflavin from 2-hydroxy-3-oxobutyl phosphate and 5-amino-6-(D-ribitylamino)uracil: step 1/2. Its function is as follows. Catalyzes the formation of 6,7-dimethyl-8-ribityllumazine by condensation of 5-amino-6-(D-ribitylamino)uracil with 3,4-dihydroxy-2-butanone 4-phosphate. This is the penultimate step in the biosynthesis of riboflavin. The chain is 6,7-dimethyl-8-ribityllumazine synthase from Pseudoalteromonas atlantica (strain T6c / ATCC BAA-1087).